The sequence spans 994 residues: Tyrosine-protein kinase Mer (994 aa).

The signal sequence occupies residues 1–18 (MVLAPLLLGLLLLPALWS). Residues 19-497 (GGTAEKWEET…TPAPGNTDSM (479 aa)) lie on the Extracellular side of the membrane. Residues 44-78 (VNHRPFSAPHSSRDQLPPPQTGRSHPAHTAAPQVT) are disordered. Ig-like C2-type domains follow at residues 75–181 (PQVT…EIVS) and 192–268 (PYFI…LTVS). Residues Asn-91, Asn-108, Asn-165, Asn-202, Asn-210, Asn-229, Asn-289, Asn-311, Asn-324, Asn-331, Asn-349, Asn-384, Asn-390, Asn-437, and Asn-449 are each glycosylated (N-linked (GlcNAc...) asparagine). The cysteines at positions 109 and 170 are disulfide-linked. Cysteines 213 and 257 form a disulfide. Fibronectin type-III domains follow at residues 281 to 376 (PPTE…TTEG) and 381 to 478 (APLN…IPEH). The helical transmembrane segment at 498-518 (FIILGCFCGFILIGLILCISL) threads the bilayer. The Cytoplasmic portion of the chain corresponds to 519-994 (ALRRRVQETK…DSLEDSEVLM (476 aa)). Ser-538 is modified (phosphoserine). The 271-residue stretch at 582 to 852 (LVLGKVLGEG…SVLRLQLEKL (271 aa)) folds into the Protein kinase domain. ATP contacts are provided by residues 588 to 596 (LGEGEFGSV) and Lys-610. Catalysis depends on Asp-718, which acts as the Proton acceptor. Residues Tyr-744, Tyr-748, Tyr-749, and Tyr-867 each carry the phosphotyrosine; by autocatalysis modification.

Belongs to the protein kinase superfamily. Tyr protein kinase family. AXL/UFO subfamily. Interacts (upon activation) with TNK2; stimulates TNK2 autophosphorylation. Interacts (via N-terminus) with extracellular ligands LGALS3, TUB, TULP1 and GAS6. Interacts with VAV1 in a phosphotyrosine-independent manner. Interacts with TIMD4; this interaction enhances TIMD4-mediated efferocytosis. In terms of processing, autophosphorylated on Tyr-744, Tyr-748 and Tyr-749 in the activation loop allowing full activity. Autophosphorylated on Tyr-867 leading to recruitment of downstream partners of the signaling cascade such as PLCG2. Expressed predominantly in the hematopoietic lineages: macrophages, NK cells, NKT cells, dendritic cells and platelets.

The protein localises to the cell membrane. The enzyme catalyses L-tyrosyl-[protein] + ATP = O-phospho-L-tyrosyl-[protein] + ADP + H(+). Functionally, receptor tyrosine kinase that transduces signals from the extracellular matrix into the cytoplasm by binding to several ligands including LGALS3, TUB, TULP1 or GAS6. Regulates many physiological processes including cell survival, migration, differentiation, and phagocytosis of apoptotic cells (efferocytosis). Ligand binding at the cell surface induces autophosphorylation of MERTK on its intracellular domain that provides docking sites for downstream signaling molecules. Following activation by ligand, interacts with GRB2 or PLCG2 and induces phosphorylation of MAPK1, MAPK2, FAK/PTK2 or RAC1. MERTK signaling plays a role in various processes such as macrophage clearance of apoptotic cells, platelet aggregation, cytoskeleton reorganization and engulfment. Functions in the retinal pigment epithelium (RPE) as a regulator of rod outer segments fragments phagocytosis. Also plays an important role in inhibition of Toll-like receptors (TLRs)-mediated innate immune response by activating STAT1, which selectively induces production of suppressors of cytokine signaling SOCS1 and SOCS3. The protein is Tyrosine-protein kinase Mer (Mertk) of Mus musculus (Mouse).